The sequence spans 290 residues: Phosphatidylglycerol--prolipoprotein diacylglyceryl transferase (290 aa).

The next 7 helical transmembrane spans lie at 21 to 41 (VSLH…MWLA), 60 to 80 (LLYA…VLFY), 96 to 116 (WDGG…MLWF), 124 to 144 (FFQV…AGRL), 199 to 219 (SQLY…NLFI), 226 to 246 (GSVS…VECF), and 259 to 279 (VISM…IMMI). Residue Arg143 participates in a 1,2-diacyl-sn-glycero-3-phospho-(1'-sn-glycerol) binding.

Belongs to the Lgt family.

The protein resides in the cell inner membrane. It catalyses the reaction L-cysteinyl-[prolipoprotein] + a 1,2-diacyl-sn-glycero-3-phospho-(1'-sn-glycerol) = an S-1,2-diacyl-sn-glyceryl-L-cysteinyl-[prolipoprotein] + sn-glycerol 1-phosphate + H(+). The protein operates within protein modification; lipoprotein biosynthesis (diacylglyceryl transfer). In terms of biological role, catalyzes the transfer of the diacylglyceryl group from phosphatidylglycerol to the sulfhydryl group of the N-terminal cysteine of a prolipoprotein, the first step in the formation of mature lipoproteins. The chain is Phosphatidylglycerol--prolipoprotein diacylglyceryl transferase from Yersinia enterocolitica serotype O:8 / biotype 1B (strain NCTC 13174 / 8081).